The following is a 577-amino-acid chain: Arginine--tRNA ligase (577 aa).

Residues 122 to 132 (PNVAKEMHVGH) carry the 'HIGH' region motif.

Belongs to the class-I aminoacyl-tRNA synthetase family. As to quaternary structure, monomer.

It is found in the cytoplasm. The catalysed reaction is tRNA(Arg) + L-arginine + ATP = L-arginyl-tRNA(Arg) + AMP + diphosphate. The polypeptide is Arginine--tRNA ligase (Shigella flexneri).